We begin with the raw amino-acid sequence, 262 residues long: PsbP domain-containing protein 6, chloroplastic (262 aa).

A disulfide bridge connects residues Cys128 and Cys132.

The protein belongs to the PsbP family.

It localises to the plastid. It is found in the chloroplast thylakoid lumen. May be involved in the redox regulation of photosystem II. The protein is PsbP domain-containing protein 6, chloroplastic (PPD6) of Arabidopsis thaliana (Mouse-ear cress).